Reading from the N-terminus, the 422-residue chain is Dihydroorotase (422 aa).

The Zn(2+) site is built by His57 and His59. Residues 59 to 61 and Asn91 contribute to the substrate site; that span reads HLR. The Zn(2+) site is built by Asp149, His176, and His229. Asn275 contacts substrate. Asp302 provides a ligand contact to Zn(2+). Asp302 is an active-site residue. Residues His306 and 320–321 each bind substrate; that span reads FG.

It belongs to the metallo-dependent hydrolases superfamily. DHOase family. Class I DHOase subfamily. It depends on Zn(2+) as a cofactor.

It catalyses the reaction (S)-dihydroorotate + H2O = N-carbamoyl-L-aspartate + H(+). Its pathway is pyrimidine metabolism; UMP biosynthesis via de novo pathway; (S)-dihydroorotate from bicarbonate: step 3/3. In terms of biological role, catalyzes the reversible cyclization of carbamoyl aspartate to dihydroorotate. The polypeptide is Dihydroorotase (Endomicrobium trichonymphae).